Here is a 420-residue protein sequence, read N- to C-terminus: Ribulose bisphosphate carboxylase (420 aa).

The active-site Proton acceptor is lysine 155. Residue lysine 157 coordinates substrate. Residues lysine 181, aspartate 183, and glutamate 184 each contribute to the Mg(2+) site. At lysine 181 the chain carries N6-carboxylysine. Histidine 273 functions as the Proton acceptor in the catalytic mechanism. Residues arginine 274, histidine 306, serine 343 to glycine 345, and glutamine 365 to glycine 368 each bind substrate.

It belongs to the RuBisCO large chain family. Type III subfamily. Homodimer or homodecamer. In contrast to form I RuBisCO, the form III RuBisCO is composed solely of large subunits. It depends on Mg(2+) as a cofactor.

The enzyme catalyses 2 (2R)-3-phosphoglycerate + 2 H(+) = D-ribulose 1,5-bisphosphate + CO2 + H2O. It catalyses the reaction D-ribulose 1,5-bisphosphate + O2 = 2-phosphoglycolate + (2R)-3-phosphoglycerate + 2 H(+). Its function is as follows. Catalyzes the addition of molecular CO(2) and H(2)O to ribulose 1,5-bisphosphate (RuBP), generating two molecules of 3-phosphoglycerate (3-PGA). Functions in an archaeal AMP degradation pathway, together with AMP phosphorylase and R15P isomerase. This chain is Ribulose bisphosphate carboxylase, found in Pyrococcus furiosus (strain ATCC 43587 / DSM 3638 / JCM 8422 / Vc1).